A 370-amino-acid polypeptide reads, in one-letter code: MAIISSRAAGAEDPGQRQQKSSARRRESKLAFARAEGLLQPQAHPSEAQEESLRPRTLAEYIGQTELKEVLSIAIAAARARGEPLDHLLFYGPPGLGKTTVAAVLAAEMGSRFYMTTAPALESPRDIAGYLVRLKQGDVLFIDEIHRLPKVTEELLYPAMEDFRLDITVGKGRSARITSIPLERFTLIGATTRIGALTSPLRDRFGQVQRLRFYEPHELAEIVLRSARLLNTSIDRAGAEEIARRSRGTPRIANRLLKRVRDYAQVRGDGHISREVAAAALELFQVDPMGLDWTDRKLLTVLVEQFGGGPVGLETMAAVTGEDPQTIEEVYEPYLLQIGYLQRTPRGRVVTPAALQHLGYTAQSPLPVWS.

The segment at 1–54 (MAIISSRAAGAEDPGQRQQKSSARRRESKLAFARAEGLLQPQAHPSEAQEESLR) is disordered. Positions 13–214 (DPGQRQQKSS…FGQVQRLRFY (202 aa)) are large ATPase domain (RuvB-L). Residues leucine 53, arginine 54, glycine 95, lysine 98, threonine 99, threonine 100, 161–163 (EDF), arginine 204, tyrosine 214, and arginine 251 contribute to the ATP site. Threonine 99 contacts Mg(2+). Residues 215 to 285 (EPHELAEIVL…VAAAALELFQ (71 aa)) form a small ATPAse domain (RuvB-S) region. Residues 288–370 (PMGLDWTDRK…TAQSPLPVWS (83 aa)) form a head domain (RuvB-H) region. DNA-binding residues include arginine 343 and arginine 348.

It belongs to the RuvB family. As to quaternary structure, homohexamer. Forms an RuvA(8)-RuvB(12)-Holliday junction (HJ) complex. HJ DNA is sandwiched between 2 RuvA tetramers; dsDNA enters through RuvA and exits via RuvB. An RuvB hexamer assembles on each DNA strand where it exits the tetramer. Each RuvB hexamer is contacted by two RuvA subunits (via domain III) on 2 adjacent RuvB subunits; this complex drives branch migration. In the full resolvosome a probable DNA-RuvA(4)-RuvB(12)-RuvC(2) complex forms which resolves the HJ.

Its subcellular location is the cytoplasm. The catalysed reaction is ATP + H2O = ADP + phosphate + H(+). Functionally, the RuvA-RuvB-RuvC complex processes Holliday junction (HJ) DNA during genetic recombination and DNA repair, while the RuvA-RuvB complex plays an important role in the rescue of blocked DNA replication forks via replication fork reversal (RFR). RuvA specifically binds to HJ cruciform DNA, conferring on it an open structure. The RuvB hexamer acts as an ATP-dependent pump, pulling dsDNA into and through the RuvAB complex. RuvB forms 2 homohexamers on either side of HJ DNA bound by 1 or 2 RuvA tetramers; 4 subunits per hexamer contact DNA at a time. Coordinated motions by a converter formed by DNA-disengaged RuvB subunits stimulates ATP hydrolysis and nucleotide exchange. Immobilization of the converter enables RuvB to convert the ATP-contained energy into a lever motion, pulling 2 nucleotides of DNA out of the RuvA tetramer per ATP hydrolyzed, thus driving DNA branch migration. The RuvB motors rotate together with the DNA substrate, which together with the progressing nucleotide cycle form the mechanistic basis for DNA recombination by continuous HJ branch migration. Branch migration allows RuvC to scan DNA until it finds its consensus sequence, where it cleaves and resolves cruciform DNA. The protein is Holliday junction branch migration complex subunit RuvB 2 of Synechococcus sp. (strain JA-3-3Ab) (Cyanobacteria bacterium Yellowstone A-Prime).